We begin with the raw amino-acid sequence, 61 residues long: UPF0434 protein PSPPH_1629 (61 aa).

The protein belongs to the UPF0434 family.

This Pseudomonas savastanoi pv. phaseolicola (strain 1448A / Race 6) (Pseudomonas syringae pv. phaseolicola (strain 1448A / Race 6)) protein is UPF0434 protein PSPPH_1629.